The primary structure comprises 61 residues: Small ribosomal subunit protein uS14 (61 aa).

Zn(2+) contacts are provided by Cys-24, Cys-27, Cys-40, and Cys-43.

The protein belongs to the universal ribosomal protein uS14 family. Zinc-binding uS14 subfamily. In terms of assembly, part of the 30S ribosomal subunit. Contacts proteins S3 and S10. Zn(2+) is required as a cofactor.

Binds 16S rRNA, required for the assembly of 30S particles and may also be responsible for determining the conformation of the 16S rRNA at the A site. In Roseiflexus castenholzii (strain DSM 13941 / HLO8), this protein is Small ribosomal subunit protein uS14.